Reading from the N-terminus, the 254-residue chain is Pyridoxine 5'-phosphate synthase (254 aa).

Asparagine 12 provides a ligand contact to 3-amino-2-oxopropyl phosphate. 14-15 provides a ligand contact to 1-deoxy-D-xylulose 5-phosphate; the sequence is DH. Arginine 23 provides a ligand contact to 3-amino-2-oxopropyl phosphate. Histidine 48 acts as the Proton acceptor in catalysis. Residues arginine 50 and histidine 55 each coordinate 1-deoxy-D-xylulose 5-phosphate. Glutamate 75 functions as the Proton acceptor in the catalytic mechanism. Position 105 (threonine 105) interacts with 1-deoxy-D-xylulose 5-phosphate. Histidine 199 acts as the Proton donor in catalysis. 3-amino-2-oxopropyl phosphate is bound by residues glycine 200 and 221–222; that span reads GF.

The protein belongs to the PNP synthase family. Homooctamer; tetramer of dimers.

It localises to the cytoplasm. It carries out the reaction 3-amino-2-oxopropyl phosphate + 1-deoxy-D-xylulose 5-phosphate = pyridoxine 5'-phosphate + phosphate + 2 H2O + H(+). Its pathway is cofactor biosynthesis; pyridoxine 5'-phosphate biosynthesis; pyridoxine 5'-phosphate from D-erythrose 4-phosphate: step 5/5. Functionally, catalyzes the complicated ring closure reaction between the two acyclic compounds 1-deoxy-D-xylulose-5-phosphate (DXP) and 3-amino-2-oxopropyl phosphate (1-amino-acetone-3-phosphate or AAP) to form pyridoxine 5'-phosphate (PNP) and inorganic phosphate. In Rhodopseudomonas palustris (strain ATCC BAA-98 / CGA009), this protein is Pyridoxine 5'-phosphate synthase.